Reading from the N-terminus, the 577-residue chain is Arginine--tRNA ligase (577 aa).

The short motif at 122 to 132 (PNVAKEMHVGH) is the 'HIGH' region element.

The protein belongs to the class-I aminoacyl-tRNA synthetase family. As to quaternary structure, monomer.

The protein localises to the cytoplasm. The enzyme catalyses tRNA(Arg) + L-arginine + ATP = L-arginyl-tRNA(Arg) + AMP + diphosphate. The chain is Arginine--tRNA ligase from Haemophilus influenzae (strain PittEE).